The chain runs to 182 residues: MSQARHELDWLNDEVVVSEIDVVNENVIAGKLPDVIKKVLGWGYGNSTWPLGFGIACCAIEMMAACSSKYDIARFGSEAMRMSPRQADVMIVAGTVNEKMAVVVRRLYDQMSEPKFVIAMGACASNGGPYWDTYNVVDGVHKVVPVDVYVPGCPPRPEALLQGLMEIQEMIKTGKRGLITKG.

[4Fe-4S] cluster is bound by residues Cys57, Cys58, Cys123, and Cys153.

This sequence belongs to the complex I 20 kDa subunit family. As to quaternary structure, NDH-1 is composed of 14 different subunits. Subunits NuoB, C, D, E, F, and G constitute the peripheral sector of the complex. [4Fe-4S] cluster is required as a cofactor.

Its subcellular location is the cell membrane. The enzyme catalyses a quinone + NADH + 5 H(+)(in) = a quinol + NAD(+) + 4 H(+)(out). In terms of biological role, NDH-1 shuttles electrons from NADH, via FMN and iron-sulfur (Fe-S) centers, to quinones in the respiratory chain. The immediate electron acceptor for the enzyme in this species is believed to be a menaquinone. Couples the redox reaction to proton translocation (for every two electrons transferred, four hydrogen ions are translocated across the cytoplasmic membrane), and thus conserves the redox energy in a proton gradient. This Symbiobacterium thermophilum (strain DSM 24528 / JCM 14929 / IAM 14863 / T) protein is NADH-quinone oxidoreductase subunit B 2.